The chain runs to 476 residues: Adenosylhomocysteinase (476 aa).

The substrate site is built by Thr62, Asp141, and Glu201. An NAD(+)-binding site is contributed by 202–204 (TTT). Residues Lys231 and Asp235 each coordinate substrate. NAD(+) is bound by residues Asn236, 265 to 270 (GYGDVG), Glu288, Asn323, 344 to 346 (IGH), and Asn389.

This sequence belongs to the adenosylhomocysteinase family. NAD(+) serves as cofactor.

It is found in the cytoplasm. It catalyses the reaction S-adenosyl-L-homocysteine + H2O = L-homocysteine + adenosine. Its pathway is amino-acid biosynthesis; L-homocysteine biosynthesis; L-homocysteine from S-adenosyl-L-homocysteine: step 1/1. Its function is as follows. May play a key role in the regulation of the intracellular concentration of adenosylhomocysteine. This is Adenosylhomocysteinase from Delftia acidovorans (strain DSM 14801 / SPH-1).